Reading from the N-terminus, the 308-residue chain is GTPase Era (308 aa).

The Era-type G domain occupies 9-179 (RAGFVALIGE…RAWLGASLPE (171 aa)). A G1 region spans residues 17-24 (GEPNAGKS). Residue 17–24 (GEPNAGKS) participates in GTP binding. The G2 stretch occupies residues 43–47 (QTTRA). A G3 region spans residues 64-67 (DTPG). GTP is bound by residues 64–68 (DTPGL) and 129–132 (NKID). The tract at residues 129–132 (NKID) is G4. The tract at residues 158–160 (ISA) is G5. The 78-residue stretch at 210–287 (LHQELPYQLT…HLFLQVKVRP (78 aa)) folds into the KH type-2 domain.

Belongs to the TRAFAC class TrmE-Era-EngA-EngB-Septin-like GTPase superfamily. Era GTPase family. As to quaternary structure, monomer.

It localises to the cytoplasm. The protein resides in the cell inner membrane. Functionally, an essential GTPase that binds both GDP and GTP, with rapid nucleotide exchange. Plays a role in 16S rRNA processing and 30S ribosomal subunit biogenesis and possibly also in cell cycle regulation and energy metabolism. This is GTPase Era from Dinoroseobacter shibae (strain DSM 16493 / NCIMB 14021 / DFL 12).